A 393-amino-acid chain; its full sequence is S-adenosylmethionine synthase (393 aa).

A Mg(2+)-binding site is contributed by Glu9. His15 is a binding site for ATP. Glu43 serves as a coordination point for K(+). Residues Glu56 and Gln99 each coordinate L-methionine. Residues 167 to 169 (HGK), 235 to 238 (SGRF), Asp246, 252 to 253 (RK), Ala269, Lys273, and Lys277 contribute to the ATP site. L-methionine is bound at residue Asp246. L-methionine is bound at residue Lys277.

It belongs to the AdoMet synthase family. In terms of assembly, homotetramer. Mn(2+) serves as cofactor. Requires Mg(2+) as cofactor. Co(2+) is required as a cofactor. It depends on K(+) as a cofactor. Root.

It localises to the cytoplasm. The catalysed reaction is L-methionine + ATP + H2O = S-adenosyl-L-methionine + phosphate + diphosphate. It participates in amino-acid biosynthesis; S-adenosyl-L-methionine biosynthesis; S-adenosyl-L-methionine from L-methionine: step 1/1. Functionally, catalyzes the formation of S-adenosylmethionine from methionine and ATP. The reaction comprises two steps that are both catalyzed by the same enzyme: formation of S-adenosylmethionine (AdoMet) and triphosphate, and subsequent hydrolysis of the triphosphate. In Pinus banksiana (Jack pine), this protein is S-adenosylmethionine synthase (METK).